We begin with the raw amino-acid sequence, 478 residues long: Glutamyl-tRNA(Gln) amidotransferase subunit A (478 aa).

Residues K72 and S147 each act as charge relay system in the active site. S171 serves as the catalytic Acyl-ester intermediate.

The protein belongs to the amidase family. GatA subfamily. Heterotrimer of A, B and C subunits.

The catalysed reaction is L-glutamyl-tRNA(Gln) + L-glutamine + ATP + H2O = L-glutaminyl-tRNA(Gln) + L-glutamate + ADP + phosphate + H(+). Functionally, allows the formation of correctly charged Gln-tRNA(Gln) through the transamidation of misacylated Glu-tRNA(Gln) in organisms which lack glutaminyl-tRNA synthetase. The reaction takes place in the presence of glutamine and ATP through an activated gamma-phospho-Glu-tRNA(Gln). This chain is Glutamyl-tRNA(Gln) amidotransferase subunit A, found in Saccharolobus solfataricus (strain ATCC 35092 / DSM 1617 / JCM 11322 / P2) (Sulfolobus solfataricus).